Consider the following 1193-residue polypeptide: Dynamin-like protein A (1193 aa).

Positions 1–609 (MTDQNRKELL…AFRERVKRLE (609 aa)) are D1, associates with and fuses membranes, tethers lipsomes. The segment at 50 to 57 (GHYSAGKS) is G1 motif D1. The tract at residues 76–78 (TSA) is G2 motif D1. Residues 141–144 (DTPG) are G3 motif D1. Positions 199 to 202 (NQID) are G4 motif D1. The interval 561–1193 (MPKSEIKMEQ…WKNSDNTIKM (633 aa)) is D2, does not associate with membranes. The tract at residues 619–626 (GGFSSGKS) is G1 motif D2. Residues 645–647 (TTA) form a G2 motif D2 region. Positions 774–777 (DTPG) are G3 motif D2. A G4 motif D2 region spans residues 837-840 (NAAD).

This sequence belongs to the TRAFAC class dynamin-like GTPase superfamily. Dynamin/Fzo/YdjA family. Homodimer in solution. Both D1 and D2 domains interact with YwpG, YneK interacts only with D1 while RNase Y (rny) only interacts with whole protein. Probably oligomerizes at damaged membrane sites. It depends on Mg(2+) as a cofactor.

The protein resides in the cell membrane. The catalysed reaction is GTP + H2O = GDP + phosphate + H(+). Its function is as follows. Mediates lipid mixing of vesicles and full mixing of their contents in the absence and presence of GTP. Tethers and mixes small vesicles better than larger ones, indicating a curvature preference. GTP slows down DynA-mediated lipid fusion, perhaps controlling its activity. Prefers phospholipid composition close to the B.subtilis membrane; requires phosphatidylglycerol for fusion has no activity on pure phosphatidylethanolamine vesicles. Regulates membrane lipid diffusion. Required to prevent membrane damage when exposed to low levels of membrane-damaging antibiotics or to bacteriophage. Probably surveys the cell membrane for stress; localizes to sites of membrane damage (treatment with nisin) and forms foci in cells treated with pore-forming compounds (CCCP). May assist membrane repair, possibly by membrane tethering and fusion. Probably functions both in early and late cell division, affects the proper formation of the FtsZ ring. Plays a non-redundant role with flottilin (floT) in membrane dynamics and cell shape. Probably able to bend membranes. Tethers liposomes and mediates their fusion; this does not require GTPase activity or the presence of GTP. Both GTPase domains (dynamin-type G) are required for GTPase activity. In terms of biological role, has intrinsic affinity for membranes and membrane distortion capability; causes tubulation and membrane distortion when expressed in a Drosophila cell line. In Bacillus subtilis (strain 168), this protein is Dynamin-like protein A.